The sequence spans 691 residues: Methionine--tRNA ligase (691 aa).

The 'HIGH' region signature appears at 14-24; sequence PYANGPFHLGH. The Zn(2+) site is built by Cys148, Cys151, Cys161, and Cys164. The 'KMSKS' region signature appears at 344–348; that stretch reads KMSKS. Residue Lys347 coordinates ATP. The region spanning 585–691 is the tRNA-binding domain; the sequence is DFDRVDLRVA…PGAKPGMRVR (107 aa).

The protein belongs to the class-I aminoacyl-tRNA synthetase family. MetG type 1 subfamily. In terms of assembly, homodimer. It depends on Zn(2+) as a cofactor.

It is found in the cytoplasm. It carries out the reaction tRNA(Met) + L-methionine + ATP = L-methionyl-tRNA(Met) + AMP + diphosphate. In terms of biological role, is required not only for elongation of protein synthesis but also for the initiation of all mRNA translation through initiator tRNA(fMet) aminoacylation. In Verminephrobacter eiseniae (strain EF01-2), this protein is Methionine--tRNA ligase.